A 446-amino-acid chain; its full sequence is Casein kinase I homolog 1 (446 aa).

Residues 12–274 form the Protein kinase domain; it reads YKVGRRIGEG…FDATPDYDYL (263 aa). ATP-binding positions include 18–26 and K41; that span reads IGEGSFGVI. Catalysis depends on D131, which acts as the Proton acceptor. Positions 308 to 430 are disordered; sequence KSRNAETENQ…ETEAPKKKKS (123 aa). S329 bears the Phosphoserine mark. Residues 332-345 are compositionally biased toward polar residues; that stretch reads PALQNHASTQNVVS. Residues 346-355 show a composition bias toward basic and acidic residues; it reads KRSDYEKPFA. The span at 360–397 shows a compositional bias: polar residues; it reads NSASDSAEPNQNSLPNPPTETKATTTVPDRSGLATNQP. A compositionally biased stretch (basic and acidic residues) spans 401–412; the sequence is DVHDSSEERVTR.

The protein belongs to the protein kinase superfamily. CK1 Ser/Thr protein kinase family. Casein kinase I subfamily.

It is found in the cytoplasm. It catalyses the reaction L-seryl-[protein] + ATP = O-phospho-L-seryl-[protein] + ADP + H(+). The catalysed reaction is L-threonyl-[protein] + ATP = O-phospho-L-threonyl-[protein] + ADP + H(+). Its function is as follows. Casein kinases are operationally defined by their preferential utilization of acidic proteins such as caseins as substrates. The sequence is that of Casein kinase I homolog 1 (cki1) from Schizosaccharomyces pombe (strain 972 / ATCC 24843) (Fission yeast).